The sequence spans 398 residues: tRNA-specific 2-thiouridylase MnmA (398 aa).

ATP is bound by residues 18–25 and Leu44; that span reads AMSGGVDS. Cys112 (nucleophile) is an active-site residue. An intrachain disulfide couples Cys112 to Cys213. Gly136 contacts ATP. The tract at residues 163–165 is interaction with tRNA; that stretch reads RDQ. The Cysteine persulfide intermediate role is filled by Cys213.

This sequence belongs to the MnmA/TRMU family.

The protein resides in the cytoplasm. The catalysed reaction is S-sulfanyl-L-cysteinyl-[protein] + uridine(34) in tRNA + AH2 + ATP = 2-thiouridine(34) in tRNA + L-cysteinyl-[protein] + A + AMP + diphosphate + H(+). Catalyzes the 2-thiolation of uridine at the wobble position (U34) of tRNA, leading to the formation of s(2)U34. This chain is tRNA-specific 2-thiouridylase MnmA, found in Agrobacterium fabrum (strain C58 / ATCC 33970) (Agrobacterium tumefaciens (strain C58)).